Reading from the N-terminus, the 214-residue chain is Superoxide dismutase [Mn] (214 aa).

Residues H27, H82, D169, and H173 each coordinate Mn(2+).

It belongs to the iron/manganese superoxide dismutase family. In terms of assembly, homodimer. Mn(2+) serves as cofactor.

It catalyses the reaction 2 superoxide + 2 H(+) = H2O2 + O2. Functionally, destroys superoxide anion radicals which are normally produced within the cells and which are toxic to biological systems. The sequence is that of Superoxide dismutase [Mn] (sodA) from Pasteurella multocida (strain Pm70).